Here is a 145-residue protein sequence, read N- to C-terminus: 3-dehydroquinate dehydratase (145 aa).

Y23 (proton acceptor) is an active-site residue. Substrate is bound by residues N75, H81, and D88. The Proton donor role is filled by H101. Substrate contacts are provided by residues 102-103 (LS) and R112.

It belongs to the type-II 3-dehydroquinase family. In terms of assembly, homododecamer.

It catalyses the reaction 3-dehydroquinate = 3-dehydroshikimate + H2O. Its pathway is metabolic intermediate biosynthesis; chorismate biosynthesis; chorismate from D-erythrose 4-phosphate and phosphoenolpyruvate: step 3/7. Catalyzes a trans-dehydration via an enolate intermediate. The polypeptide is 3-dehydroquinate dehydratase (Legionella pneumophila (strain Lens)).